A 318-amino-acid chain; its full sequence is NADH-ubiquinone oxidoreductase chain 1 (318 aa).

The next 8 membrane-spanning stretches (helical) occupy residues 2–22 (FMIN…FLTL), 69–89 (LMFI…WIPL), 100–120 (LGVL…LWSG), 146–166 (LAII…AMLI), 171–191 (YMWL…STLA), 223–243 (FFLA…ILFF), 253–273 (ELYT…FLWI), and 294–314 (LPLT…TASI).

Belongs to the complex I subunit 1 family. In terms of assembly, core subunit of respiratory chain NADH dehydrogenase (Complex I) which is composed of 45 different subunits.

The protein localises to the mitochondrion inner membrane. It carries out the reaction a ubiquinone + NADH + 5 H(+)(in) = a ubiquinol + NAD(+) + 4 H(+)(out). In terms of biological role, core subunit of the mitochondrial membrane respiratory chain NADH dehydrogenase (Complex I) which catalyzes electron transfer from NADH through the respiratory chain, using ubiquinone as an electron acceptor. Essential for the catalytic activity and assembly of complex I. The chain is NADH-ubiquinone oxidoreductase chain 1 (MT-ND1) from Felis catus (Cat).